We begin with the raw amino-acid sequence, 180 residues long: Inner membrane-spanning protein YciB (180 aa).

Helical transmembrane passes span 25 to 45 (QNATLYMLITSVICITLCYII), 49 to 69 (VSKLSIISTTVLLVSGSITLI), 76 to 96 (IKIKPTILYVIFGIIFLMSGI), 118 to 138 (ITLSYRTAAFFFFMAVVNEIV), and 150 to 170 (FKVFGIIPITFIFIVLQLPLL).

The protein belongs to the YciB family.

The protein resides in the cell inner membrane. Its function is as follows. Plays a role in cell envelope biogenesis, maintenance of cell envelope integrity and membrane homeostasis. The polypeptide is Inner membrane-spanning protein YciB (Rickettsia akari (strain Hartford)).